A 180-amino-acid polypeptide reads, in one-letter code: Large ribosomal subunit protein uL6 (180 aa).

The protein belongs to the universal ribosomal protein uL6 family. Part of the 50S ribosomal subunit.

In terms of biological role, this protein binds to the 23S rRNA, and is important in its secondary structure. It is located near the subunit interface in the base of the L7/L12 stalk, and near the tRNA binding site of the peptidyltransferase center. The sequence is that of Large ribosomal subunit protein uL6 from Thermodesulfovibrio yellowstonii (strain ATCC 51303 / DSM 11347 / YP87).